A 278-amino-acid polypeptide reads, in one-letter code: MAALFLKRLTLQTVKSENSCIRCFGKHILQKTAPAQLSPIASAPRLSFLIHAKAFSTAEDTQNEGKKTKKNKTAFSNVGRKISQRVIHLFDEKGNDLGNMHRANVIRLMDERDLRLVQRNTSTEPAEYQLMTGLQILQERQRLREMEKANPKTGPTLRKELILSSNIGQHDLDTKTKQIQQWIKKKHLVQITIKKGKNVDVSENEMEEIFHQILQTMPGIATFSSRPQAVQGGKALMCVLRAFSKNEEKAYKETQETQERDTLNKDHGNDKESNVLHQ.

A mitochondrion-targeting transit peptide spans 1–31 (MAALFLKRLTLQTVKSENSCIRCFGKHILQK). Residues 249-278 (KAYKETQETQERDTLNKDHGNDKESNVLHQ) are disordered.

It belongs to the IF-3 family.

It is found in the mitochondrion. IF-3 binds to the 28S ribosomal subunit and shifts the equilibrium between 55S ribosomes and their 39S and 28S subunits in favor of the free subunits, thus enhancing the availability of 28S subunits on which protein synthesis initiation begins. The sequence is that of Translation initiation factor IF-3, mitochondrial (MTIF3) from Homo sapiens (Human).